The chain runs to 277 residues: Uridine-cytidine kinase 1 (277 aa).

The interval 1-30 is disordered; that stretch reads MASAGGGGSESAAPEADRPQPRPFLIGVSG. 30 to 38 lines the ATP pocket; sequence GGTASGKST. The substrate site is built by Asp-87, Tyr-115, His-120, Arg-169, Arg-178, and Gln-186. Residue Asp-215 participates in ATP binding. The segment covering 238–250 has biased composition (basic residues); it reads RHRGGPNGRNHKR. The segment at 238-277 is disordered; that stretch reads RHRGGPNGRNHKRTFPEPGDHPGVLATGKRSHLESSSRPH. Thr-251 carries the post-translational modification Phosphothreonine. The segment covering 268–277 has biased composition (basic and acidic residues); it reads SHLESSSRPH.

Belongs to the uridine kinase family.

The catalysed reaction is uridine + ATP = UMP + ADP + H(+). The enzyme catalyses cytidine + ATP = CMP + ADP + H(+). Its pathway is pyrimidine metabolism; CTP biosynthesis via salvage pathway; CTP from cytidine: step 1/3. The protein operates within pyrimidine metabolism; UMP biosynthesis via salvage pathway; UMP from uridine: step 1/1. In terms of biological role, phosphorylates uridine and cytidine to uridine monophosphate and cytidine monophosphate. Does not phosphorylate deoxyribonucleosides or purine ribonucleosides. Can use ATP or GTP as a phosphate donor. In Mus musculus (Mouse), this protein is Uridine-cytidine kinase 1 (Uck1).